Here is a 116-residue protein sequence, read N- to C-terminus: Putative pterin-4-alpha-carbinolamine dehydratase (116 aa).

Belongs to the pterin-4-alpha-carbinolamine dehydratase family.

The catalysed reaction is (4aS,6R)-4a-hydroxy-L-erythro-5,6,7,8-tetrahydrobiopterin = (6R)-L-erythro-6,7-dihydrobiopterin + H2O. This Paracidovorax citrulli (strain AAC00-1) (Acidovorax citrulli) protein is Putative pterin-4-alpha-carbinolamine dehydratase.